We begin with the raw amino-acid sequence, 226 residues long: Ribonuclease 3 (226 aa).

One can recognise an RNase III domain in the interval 7 to 129; sequence LPRLCRTLGY…IIGAIYLDSD (123 aa). Glutamate 42 serves as a coordination point for Mg(2+). Aspartate 46 is an active-site residue. 2 residues coordinate Mg(2+): aspartate 115 and glutamate 118. Residue glutamate 118 is part of the active site. The 71-residue stretch at 156–226 folds into the DRBM domain; it reads DAKTLLQEYL…AAQVLELLKK (71 aa).

Belongs to the ribonuclease III family. As to quaternary structure, homodimer. Mg(2+) is required as a cofactor.

It is found in the cytoplasm. It catalyses the reaction Endonucleolytic cleavage to 5'-phosphomonoester.. Digests double-stranded RNA. Involved in the processing of primary rRNA transcript to yield the immediate precursors to the large and small rRNAs (23S and 16S). Processes some mRNAs, and tRNAs when they are encoded in the rRNA operon. Processes pre-crRNA and tracrRNA of type II CRISPR loci if present in the organism. The chain is Ribonuclease 3 from Shewanella oneidensis (strain ATCC 700550 / JCM 31522 / CIP 106686 / LMG 19005 / NCIMB 14063 / MR-1).